Reading from the N-terminus, the 300-residue chain is 33 kDa chaperonin (300 aa).

2 disulfide bridges follow: cysteine 235–cysteine 237 and cysteine 269–cysteine 272.

This sequence belongs to the HSP33 family. In terms of processing, under oxidizing conditions two disulfide bonds are formed involving the reactive cysteines. Under reducing conditions zinc is bound to the reactive cysteines and the protein is inactive.

The protein resides in the cytoplasm. In terms of biological role, redox regulated molecular chaperone. Protects both thermally unfolding and oxidatively damaged proteins from irreversible aggregation. Plays an important role in the bacterial defense system toward oxidative stress. The polypeptide is 33 kDa chaperonin (Pseudomonas syringae pv. tomato (strain ATCC BAA-871 / DC3000)).